Reading from the N-terminus, the 156-residue chain is Small ribosomal subunit protein uS7 (156 aa).

It belongs to the universal ribosomal protein uS7 family. In terms of assembly, part of the 30S ribosomal subunit. Contacts proteins S9 and S11.

Its function is as follows. One of the primary rRNA binding proteins, it binds directly to 16S rRNA where it nucleates assembly of the head domain of the 30S subunit. Is located at the subunit interface close to the decoding center, probably blocks exit of the E-site tRNA. The protein is Small ribosomal subunit protein uS7 of Prochlorococcus marinus (strain MIT 9303).